The primary structure comprises 199 residues: uncharacterized protein (199 aa).

Residues 1-30 form a disordered region; the sequence is MEDAAAPGRTEGVLERQGAPPAAGQGGALV. Residues 71–101 are a coiled coil; the sequence is RANATNKLTVIAEQIQHLQEQARKVLEDAHR.

This is an uncharacterized protein from Homo sapiens (Human).